Reading from the N-terminus, the 226-residue chain is Phospholipase Culp4 (226 aa).

The first 45 residues, 1–45 (MIPRPQPHSGRWRAGAARRLTSLVAAAFAAATLLLTPALAPPASA), serve as a signal peptide directing secretion. An intrachain disulfide couples Cys47 to Cys117. Residue Ser128 is the Nucleophile of the active site. Cys191 and Cys198 are joined by a disulfide. Asp195 is an active-site residue. Residue His207 is the Proton donor/acceptor of the active site.

Belongs to the cutinase family. As to quaternary structure, homodimer.

It localises to the cell membrane. The protein localises to the secreted. Its subcellular location is the cell wall. It catalyses the reaction 1,2-dihexadecanoyl-sn-glycero-3-phosphocholine + H2O = 1-hexadecanoyl-sn-glycero-3-phosphocholine + hexadecanoate + H(+). The enzyme catalyses a butanoate ester + H2O = an aliphatic alcohol + butanoate + H(+). With respect to regulation, inhibited by high concentrations of paraoxon. Inhibited by tetrahydrolipstatin (THL), a specific lipase inhibitor. Its function is as follows. A2-type phospholipase, which is probably involved in the degradation of macrophage membrane. Hydrolyzes dipalmitoylphosphatidylcholine. Also shows moderate esterase activity and hydrolyzes the p-nitrophenol-linked aliphatic ester pNP-butyrate (C4). Does not exhibit cutinase activity. The protein is Phospholipase Culp4 of Mycobacterium tuberculosis (strain ATCC 25618 / H37Rv).